Reading from the N-terminus, the 111-residue chain is Translation initiation factor 1A (111 aa).

The region spanning 11 to 83 (KKIRLPKEGE…ERADVTWRYT (73 aa)) is the S1-like domain.

The protein belongs to the eIF-1A family.

Seems to be required for maximal rate of protein biosynthesis. Enhances ribosome dissociation into subunits and stabilizes the binding of the initiator Met-tRNA(I) to 40 S ribosomal subunits. The chain is Translation initiation factor 1A (eIF1A) from Methanopyrus kandleri (strain AV19 / DSM 6324 / JCM 9639 / NBRC 100938).